A 1674-amino-acid chain; its full sequence is Maestro heat-like repeat-containing protein family member 2A (1674 aa).

A disordered region spans residues 1 to 26 (MTEAITEAAVASSEEVSEERDDLGPL). HEAT repeat units lie at residues 73–96 (ATTEPSVVINTLIRCLQVPEISTQ), 97–133 (RKVNIYNILQDIIQQEGELEEQCVQRLVAIASKEMRE), 195–234 (MPYMGITLATIFTMLRLANEAKIRQAICSAMETFCETVQF), 254–292 (LKVFPMYRYFVTVWLRHYNPEVKLGVIKSLKPMLGLLLP), 382–419 (SYPKELMKFFFSQMETNKEAVRVGTLNLIRAIVSADEP), 424–461 (RAIYLAIRVVKNTISDTRSKVRMAILHIIGQLALCGYQ), 573–612 (PAPQKLLARLLVLMSSPYKGEGRGIAMLNLLRTLSQSIAP), 615–641 (ADMWELEIALLVRYLEEHTEFTWDQKA), 642–679 (WEDKLIQFLRNSLKKTRGSSWSLRLSKELNNQIASFDS), 739–776 (KTVLNVLHDFEERIQESEQSWQISAWRKDHPWRRETVK), 993–1030 (GQFGTMVGLIAPCTCDAHQRTRMASMNVLSSLLDLHAS), 1221–1263 (DPLM…SHRP), 1381–1420 (EKLLKPAALLLEKGADQEEDEALRVLSLRALGNMALGAPK), and 1627–1674 (LDFP…QGMS).

In Homo sapiens (Human), this protein is Maestro heat-like repeat-containing protein family member 2A (MROH2A).